The chain runs to 1068 residues: Target of Nesh-SH3 (1068 aa).

Positions 1–21 (MLSSLGCLLLCGSITLALGNA) are cleaved as a signal peptide. An N-linked (GlcNAc...) asparagine glycan is attached at Asn37. The Fibronectin type-III 1 domain occupies 116–214 (KPLQLVVGTL…KIFNHKTVVG (99 aa)). 2 disordered regions span residues 315 to 351 (SKTP…DVSE) and 384 to 811 (VFSS…SITD). Positions 326–339 (RPTTVTPETVPRST) are enriched in low complexity. A compositionally biased stretch (polar residues) spans 340-351 (KPTTSSALDVSE). The segment covering 447–462 (QPTTPAPQQTTSIPST) has biased composition (low complexity). Over residues 463 to 473 (PKRRPRPKPPR) the composition is skewed to basic residues. Polar residues predominate over residues 482–499 (AGTITPKISKSPEPTWTT). Positions 532–544 (RAPPKPKTSPRPR) are enriched in pro residues. Over residues 562–574 (PKTSPSPEVSYTT) the composition is skewed to polar residues. Low complexity-rich tracts occupy residues 603–631 (IPFI…STQE) and 737–750 (PPLR…GTPL). The segment covering 802-811 (PDNSPCSITD) has biased composition (polar residues). Positions 833-926 (PPTNLTVVTV…NTVAFSTESA (94 aa)) constitute a Fibronectin type-III 2 domain.

In terms of assembly, probably interacts with ABI3. As to expression, expressed in brain, heart, lung, liver, pancreas kidney and placenta.

It is found in the secreted. In Homo sapiens (Human), this protein is Target of Nesh-SH3.